The chain runs to 260 residues: Putative methylesterase 19 (260 aa).

Ser-81 serves as the catalytic Acyl-ester intermediate. Residues Asp-210 and His-238 each act as charge relay system in the active site.

Belongs to the AB hydrolase superfamily. Methylesterase family.

In terms of biological role, putative methylesterase. In Arabidopsis thaliana (Mouse-ear cress), this protein is Putative methylesterase 19.